The chain runs to 155 residues: Regulatory protein RecX (155 aa).

Belongs to the RecX family.

Its subcellular location is the cytoplasm. Modulates RecA activity. The protein is Regulatory protein RecX of Pseudomonas syringae pv. tomato (strain ATCC BAA-871 / DC3000).